The primary structure comprises 340 residues: Putative pyridoxal kinase C18.10 (340 aa).

Substrate contacts are provided by S19 and Y130. ATP is bound by residues T189–S190 and Q218–G230. Substrate is bound at residue D231.

It belongs to the pyridoxine kinase family. A divalent metal cation is required as a cofactor.

The protein localises to the cytoplasm. It localises to the nucleus. The enzyme catalyses pyridoxal + ATP = pyridoxal 5'-phosphate + ADP + H(+). Its function is as follows. Required for synthesis of pyridoxal-5-phosphate from vitamin B6. The sequence is that of Putative pyridoxal kinase C18.10 from Schizosaccharomyces pombe (strain 972 / ATCC 24843) (Fission yeast).